Reading from the N-terminus, the 238-residue chain is 7-cyano-7-deazaguanine synthase (238 aa).

12 to 22 (FSGGQDSTTCL) is an ATP binding site. The Zn(2+) site is built by cysteine 191, cysteine 200, cysteine 203, and cysteine 206.

The protein belongs to the QueC family. Requires Zn(2+) as cofactor.

It carries out the reaction 7-carboxy-7-deazaguanine + NH4(+) + ATP = 7-cyano-7-deazaguanine + ADP + phosphate + H2O + H(+). It participates in purine metabolism; 7-cyano-7-deazaguanine biosynthesis. Its function is as follows. Catalyzes the ATP-dependent conversion of 7-carboxy-7-deazaguanine (CDG) to 7-cyano-7-deazaguanine (preQ(0)). The polypeptide is 7-cyano-7-deazaguanine synthase (Shewanella oneidensis (strain ATCC 700550 / JCM 31522 / CIP 106686 / LMG 19005 / NCIMB 14063 / MR-1)).